The primary structure comprises 124 residues: uncharacterized protein (124 aa).

A signal peptide spans 1–22 (MGTSSVLLMIASSLILLEVVMT).

This is an uncharacterized protein from Caenorhabditis elegans.